A 396-amino-acid chain; its full sequence is Inositol polyphosphate multikinase (396 aa).

The span at 1-13 shows a compositional bias: low complexity; that stretch reads MAAEPPALRLRPP. Residues 1–22 are disordered; that stretch reads MAAEPPALRLRPPGSTGDSPPV. Position 2 is an N-acetylalanine (Ala-2). Position 19 is a phosphoserine (Ser-19). ATP is bound at residue Lys-58. Arg-65 contributes to the substrate binding site. Residues 114-116 and Asp-127 contribute to the ATP site; that span reads EDV. Substrate contacts are provided by residues Lys-129, 143 to 150, and Gln-179; that span reads KIQQQVSK. The Nuclear localization signal signature appears at 300 to 310; it reads RHRKLYAKKHQ. Residue Asp-365 participates in ATP binding.

This sequence belongs to the inositol phosphokinase (IPK) family. Requires Mg(2+) as cofactor.

The protein resides in the nucleus. It catalyses the reaction 1D-myo-inositol 1,4,5-trisphosphate + 2 ATP = 1D-myo-inositol 1,3,4,5,6-pentakisphosphate + 2 ADP + 2 H(+). It carries out the reaction 1D-myo-inositol 1,3,4,6-tetrakisphosphate + ATP = 1D-myo-inositol 1,3,4,5,6-pentakisphosphate + ADP + H(+). The catalysed reaction is 1-octadecanoyl-2-(5Z,8Z,11Z,14Z)-eicosatetraenoyl-sn-glycero-3-phospho-1D-myo-inositol 4,5-bisphosphate + ATP = 1-octadecanoyl-2-(5Z,8Z,11Z,14Z-eicosatetraenoyl)-sn-glycero-3-phospho-(1D-myo-inositol 3,4,5-triphosphate) + ADP + H(+). The enzyme catalyses a 1,2-diacyl-sn-glycero-3-phospho-(1D-myo-inositol-4,5-bisphosphate) + ATP = a 1,2-diacyl-sn-glycero-3-phospho-(1D-myo-inositol-3,4,5-trisphosphate) + ADP + H(+). It catalyses the reaction 1D-myo-inositol 1,4,5,6-tetrakisphosphate + ATP = 1D-myo-inositol 1,3,4,5,6-pentakisphosphate + ADP + H(+). Its pathway is phospholipid metabolism; phosphatidylinositol metabolism. Its function is as follows. Inositol phosphate kinase with a broad substrate specificity. Phosphorylates inositol 1,4,5-trisphosphate (Ins(1,4,5)P3) first to inositol 1,3,4,5-tetrakisphosphate and then to inositol 1,3,4,5,6-pentakisphosphate (Ins(1,3,4,5,6)P5). Phosphorylates inositol 1,3,4,6-tetrakisphosphate (Ins(1,3,4,6)P4). Phosphorylates inositol 1,4,5,6-tetrakisphosphate (Ins(1,4,5,6)P4). Phosphorylates glycero-3-phospho-1D-myo-inositol 4,5-bisphosphate to glycero-3-phospho-1D-myo-inositol 3,4,5-trisphosphate. Plays an important role in MLKL-mediated necroptosis via its role in the biosynthesis of inositol pentakisphosphate (InsP5) and inositol hexakisphosphate (InsP6). Binding of these highly phosphorylated inositol phosphates to MLKL mediates the release of an N-terminal auto-inhibitory region, leading to activation of the kinase. Essential for activated phospho-MLKL to oligomerize and localize to the cell membrane during necroptosis. Required for normal embryonic development, probably via its role in the biosynthesis of inositol 1,3,4,5,6-pentakisphosphate (Ins(1,3,4,5,6)P5) and inositol hexakisphosphate (InsP6). The polypeptide is Inositol polyphosphate multikinase (Ipmk) (Mus musculus (Mouse)).